Reading from the N-terminus, the 202-residue chain is NADH:(hydroxy)cinnamate reductase subunit CrdA (202 aa).

It belongs to the NADH-dependent flavin reductase family. In terms of assembly, NADH:(hydroxy)cinnamate reductase Crd is a heterodimer composed of CrdA and CrdB subunits, encoded by adjacent genes. The cofactor is FMN.

In terms of biological role, component of the NADH:(hydroxy)cinnamate reductase. CrdA is probably reduced by NADH and then transfers the electrons to the catalytic center of CrdB. Is likely involved in protecting V.ruber from (hydroxy)cinnamate poisoning. The protein is NADH:(hydroxy)cinnamate reductase subunit CrdA of Vibrio ruber (strain DSM 16370 / JCM 11486 / BCRC 17186 / CECT 7878 / LMG 23124 / VR1).